A 466-amino-acid polypeptide reads, in one-letter code: Clusterin-like protein 1 (466 aa).

The N-terminal stretch at 1–20 (MKPPLLVFIVCLLWLKDSHC) is a signal peptide. Residues 57–111 (KQMKIMMERKEKEHTNLMSTLKKCREEKQEALKLLNEVQEHLEEEERLCRESLAD) adopt a coiled-coil conformation. Cystine bridges form between Cys105/Cys333, Cys116/Cys325, Cys119/Cys322, Cys124/Cys315, and Cys131/Cys305. 6 N-linked (GlcNAc...) asparagine glycosylation sites follow: Asn196, Asn257, Asn311, Asn351, Asn412, and Asn431.

This sequence belongs to the clusterin family.

The protein resides in the secreted. This Homo sapiens (Human) protein is Clusterin-like protein 1 (CLUL1).